The primary structure comprises 275 residues: Large ribosomal subunit protein uL2 (275 aa).

Disordered regions lie at residues 28–59 (KPFAPLLDSQSTTAGRNNNGHITTRHKGGGHK) and 224–275 (AMNP…RHKR). A compositionally biased stretch (polar residues) spans 35–49 (DSQSTTAGRNNNGHI). A compositionally biased stretch (basic residues) spans 50-59 (TTRHKGGGHK).

It belongs to the universal ribosomal protein uL2 family. As to quaternary structure, part of the 50S ribosomal subunit. Forms a bridge to the 30S subunit in the 70S ribosome.

In terms of biological role, one of the primary rRNA binding proteins. Required for association of the 30S and 50S subunits to form the 70S ribosome, for tRNA binding and peptide bond formation. It has been suggested to have peptidyltransferase activity; this is somewhat controversial. Makes several contacts with the 16S rRNA in the 70S ribosome. The polypeptide is Large ribosomal subunit protein uL2 (Paraburkholderia xenovorans (strain LB400)).